A 68-amino-acid chain; its full sequence is DNA gyrase inhibitor YacG (68 aa).

Zn(2+) contacts are provided by Cys-14, Cys-17, Cys-29, and Cys-33.

The protein belongs to the DNA gyrase inhibitor YacG family. In terms of assembly, interacts with GyrB. Requires Zn(2+) as cofactor.

Inhibits all the catalytic activities of DNA gyrase by preventing its interaction with DNA. Acts by binding directly to the C-terminal domain of GyrB, which probably disrupts DNA binding by the gyrase. This is DNA gyrase inhibitor YacG from Azorhizobium caulinodans (strain ATCC 43989 / DSM 5975 / JCM 20966 / LMG 6465 / NBRC 14845 / NCIMB 13405 / ORS 571).